Consider the following 240-residue polypeptide: Keratinocyte-associated protein 3 (240 aa).

Transmembrane regions (helical) follow at residues 21–41 (VGLA…VLHG), 63–83 (VISV…LLAS), 94–114 (VLLA…LGLL), and 163–183 (ALAL…LSGY).

This sequence belongs to the TMEM54 family. Expressed in skin, pancreas and keratinocytes.

Its subcellular location is the membrane. The sequence is that of Keratinocyte-associated protein 3 (KRTCAP3) from Homo sapiens (Human).